Reading from the N-terminus, the 269-residue chain is Ribosomal RNA small subunit methyltransferase J (269 aa).

S-adenosyl-L-methionine contacts are provided by residues 125 to 126 (ER) and Asp179.

It belongs to the methyltransferase superfamily. RsmJ family.

The protein resides in the cytoplasm. The catalysed reaction is guanosine(1516) in 16S rRNA + S-adenosyl-L-methionine = N(2)-methylguanosine(1516) in 16S rRNA + S-adenosyl-L-homocysteine + H(+). Its function is as follows. Specifically methylates the guanosine in position 1516 of 16S rRNA. The polypeptide is Ribosomal RNA small subunit methyltransferase J (Pseudomonas syringae pv. tomato (strain ATCC BAA-871 / DC3000)).